The chain runs to 125 residues: Crustacean hyperglycemic hormones 5 (125 aa).

Residues 1–34 (MKPGNTSFNMVSFRMVWTAMMATLLVAGASSAGT) form the signal peptide. 3 disulfides stabilise this stretch: Cys58–Cys94, Cys74–Cys90, and Cys77–Cys103. The residue at position 123 (Val123) is a Valine amide.

The protein belongs to the arthropod CHH/MIH/GIH/VIH hormone family. Produced by the medulla terminalis X-organ in the eyestalks and transported to the sinus gland where they are stored and released.

The protein localises to the secreted. Hormone found in the sinus gland of isopods and decapods which controls the blood sugar level. Has a secretagogue action over the amylase released from the midgut gland. May act as a stress hormone and may be involved in the control of molting and reproduction. This chain is Crustacean hyperglycemic hormones 5, found in Penaeus japonicus (Kuruma prawn).